The primary structure comprises 183 residues: ATP-dependent protease subunit HslV (183 aa).

Residue Thr-10 is part of the active site. Na(+) is bound by residues Ala-164, Cys-167, and Thr-170.

The protein belongs to the peptidase T1B family. HslV subfamily. A double ring-shaped homohexamer of HslV is capped on each side by a ring-shaped HslU homohexamer. The assembly of the HslU/HslV complex is dependent on binding of ATP.

It localises to the cytoplasm. The enzyme catalyses ATP-dependent cleavage of peptide bonds with broad specificity.. Allosterically activated by HslU binding. In terms of biological role, protease subunit of a proteasome-like degradation complex believed to be a general protein degrading machinery. The polypeptide is ATP-dependent protease subunit HslV (Rhizorhabdus wittichii (strain DSM 6014 / CCUG 31198 / JCM 15750 / NBRC 105917 / EY 4224 / RW1) (Sphingomonas wittichii)).